A 648-amino-acid chain; its full sequence is Protein teflon (648 aa).

Residues 33 to 56 (LYCHFCRDLFTQLPEFLRHLQGAH) form a C2H2-type 1 zinc finger. 2 disordered regions span residues 76–127 (SGEQ…GSQN) and 146–170 (EHIN…NSES). Polar residues predominate over residues 85 to 94 (VGHNSSSSDS). Basic and acidic residues predominate over residues 96–107 (GLAKSEDSRATE). The C2H2-type 2; degenerate zinc-finger motif lies at 598–620 (YFCKCCDDIFTLNEDYIRHLVSQ). The C2H2-type 3 zinc finger occupies 624–647 (YQCTKCIKTFKYQGHYDKHMRTVH).

It belongs to the Teflon family.

The protein localises to the nucleus. It localises to the chromosome. Specifically required in males for proper segregation of autosomal bivalents at meiosis I. Expression is required in the male germ line prior to spermatocyte stage S4. May have a role as a bridging molecule maintaining adhesion to hold autosome bivalents together via heterochromatic connections. The protein is Protein teflon of Drosophila yakuba (Fruit fly).